We begin with the raw amino-acid sequence, 101 residues long: Putative defensin-like protein 253 (101 aa).

The first 23 residues, 1–23 (MRFASLFVVYCTFMFLDISHVKC), serve as a signal peptide directing secretion. Cystine bridges form between C31/C84, C41/C66, C49/C76, and C64/C78.

Belongs to the DEFL family.

Its subcellular location is the secreted. This chain is Putative defensin-like protein 253 (SCRL15), found in Arabidopsis thaliana (Mouse-ear cress).